The chain runs to 876 residues: Alanine--tRNA ligase (876 aa).

Positions 565, 569, 667, and 671 each coordinate Zn(2+).

Belongs to the class-II aminoacyl-tRNA synthetase family. The cofactor is Zn(2+).

It localises to the cytoplasm. It carries out the reaction tRNA(Ala) + L-alanine + ATP = L-alanyl-tRNA(Ala) + AMP + diphosphate. Its function is as follows. Catalyzes the attachment of alanine to tRNA(Ala) in a two-step reaction: alanine is first activated by ATP to form Ala-AMP and then transferred to the acceptor end of tRNA(Ala). Also edits incorrectly charged Ser-tRNA(Ala) and Gly-tRNA(Ala) via its editing domain. This Staphylococcus aureus (strain MSSA476) protein is Alanine--tRNA ligase.